The chain runs to 351 residues: N-acetyl-gamma-glutamyl-phosphate reductase (351 aa).

Residue cysteine 154 is part of the active site.

This sequence belongs to the NAGSA dehydrogenase family. Type 1 subfamily.

The protein localises to the cytoplasm. The enzyme catalyses N-acetyl-L-glutamate 5-semialdehyde + phosphate + NADP(+) = N-acetyl-L-glutamyl 5-phosphate + NADPH + H(+). The protein operates within amino-acid biosynthesis; L-arginine biosynthesis; N(2)-acetyl-L-ornithine from L-glutamate: step 3/4. Functionally, catalyzes the NADPH-dependent reduction of N-acetyl-5-glutamyl phosphate to yield N-acetyl-L-glutamate 5-semialdehyde. The chain is N-acetyl-gamma-glutamyl-phosphate reductase from Prochlorococcus marinus (strain AS9601).